We begin with the raw amino-acid sequence, 302 residues long: 4-hydroxy-tetrahydrodipicolinate synthase (302 aa).

Thr-55 serves as a coordination point for pyruvate. Residue Tyr-144 is the Proton donor/acceptor of the active site. Lys-172 acts as the Schiff-base intermediate with substrate in catalysis. Val-214 contacts pyruvate.

Belongs to the DapA family. As to quaternary structure, homotetramer; dimer of dimers.

It is found in the cytoplasm. It catalyses the reaction L-aspartate 4-semialdehyde + pyruvate = (2S,4S)-4-hydroxy-2,3,4,5-tetrahydrodipicolinate + H2O + H(+). Its pathway is amino-acid biosynthesis; L-lysine biosynthesis via DAP pathway; (S)-tetrahydrodipicolinate from L-aspartate: step 3/4. Catalyzes the condensation of (S)-aspartate-beta-semialdehyde [(S)-ASA] and pyruvate to 4-hydroxy-tetrahydrodipicolinate (HTPA). The chain is 4-hydroxy-tetrahydrodipicolinate synthase from Synechococcus sp. (strain WH7803).